Consider the following 496-residue polypeptide: Protein RepR (496 aa).

Residues 120 to 141 (SDILTTAIDLGFMPTLIIKSDK) mediate DNA binding.

Essential for replication. This Streptococcus agalactiae protein is Protein RepR (repR).